A 501-amino-acid polypeptide reads, in one-letter code: Amidophosphoribosyltransferase (501 aa).

The active-site Nucleophile is Cys2. The Glutamine amidotransferase type-2 domain occupies 2-234 (CGIVGIVGKS…PGEAVYITEE (233 aa)). Thr303, Asp365, and Asp366 together coordinate Mg(2+).

This sequence in the C-terminal section; belongs to the purine/pyrimidine phosphoribosyltransferase family. Requires Mg(2+) as cofactor.

The enzyme catalyses 5-phospho-beta-D-ribosylamine + L-glutamate + diphosphate = 5-phospho-alpha-D-ribose 1-diphosphate + L-glutamine + H2O. Its pathway is purine metabolism; IMP biosynthesis via de novo pathway; N(1)-(5-phospho-D-ribosyl)glycinamide from 5-phospho-alpha-D-ribose 1-diphosphate: step 1/2. In terms of biological role, catalyzes the formation of phosphoribosylamine from phosphoribosylpyrophosphate (PRPP) and glutamine. The polypeptide is Amidophosphoribosyltransferase (Pseudomonas aeruginosa (strain ATCC 15692 / DSM 22644 / CIP 104116 / JCM 14847 / LMG 12228 / 1C / PRS 101 / PAO1)).